Reading from the N-terminus, the 247-residue chain is Molybdate/tungstate transport system permease protein WtpB (247 aa).

Over 1 to 8 (MRRDYTLY) the chain is Cytoplasmic. The helical transmembrane segment at 9 to 29 (LFAALGTFLIAYIAVPIAVIF) threads the bilayer. Over 30-55 (LKQASDVEMLVKTLHDPYVIEAIRNS) the chain is Extracellular. The region spanning 52-238 (IRNSLLTATA…SLSLGIFVIL (187 aa)) is the ABC transmembrane type-1 domain. Residues 56 to 76 (LLTATATALIALLFGVPLGYV) form a helical membrane-spanning segment. The Cytoplasmic segment spans residues 77–90 (LARKDFPGKSAVQA). The helical transmembrane segment at 91 to 111 (LVDVPIVIPHSVVGIMLLVTF) threads the bilayer. Topologically, residues 112 to 114 (SNS) are extracellular. Residues 115-135 (ILDSYKGIVAAMLFVSAPFTI) form a helical membrane-spanning segment. At 136–163 (NAARDGFLAVDEKLEAVARTLGASRWRA) the chain is on the cytoplasmic side. The chain crosses the membrane as a helical span at residues 164 to 184 (FLSISLPMAFPSIASGAIMTW). The Extracellular segment spans residues 185–222 (ARAISEVGAILIVAYYPKTAQVLILEYFNNYGLRASRP). A helical membrane pass occupies residues 223 to 243 (IAVIMVSLSLGIFVILRWLVG). Residues 244–247 (RKNA) are Cytoplasmic-facing.

This sequence belongs to the binding-protein-dependent transport system permease family. As to quaternary structure, the complex is composed of two ATP-binding proteins (WtpC), two transmembrane proteins (WtpB) and a solute-binding protein (WtpA).

The protein resides in the cell membrane. Functionally, part of the ABC transporter complex WtpABC involved in molybdate/tungstate import. Probably responsible for the translocation of the substrate across the membrane. The chain is Molybdate/tungstate transport system permease protein WtpB (wtpB) from Thermococcus kodakarensis (strain ATCC BAA-918 / JCM 12380 / KOD1) (Pyrococcus kodakaraensis (strain KOD1)).